Reading from the N-terminus, the 1434-residue chain is Probable ATP-dependent RNA helicase spindle-E (1434 aa).

Residues 125 to 292 (LAAINAHPVV…FTTTNSIPPV (168 aa)) form the Helicase ATP-binding domain. 138–145 (GETGCGKT) serves as a coordination point for ATP. A DEAH box motif is present at residues 238-241 (DEVH). The region spanning 354 to 526 (QSRQSYDEAL…NSVLKAKVLN (173 aa)) is the Helicase C-terminal domain. Residues 938–1001 (ASAIAKGMMV…RLMPRELTEQ (64 aa)) enclose the Tudor domain.

This sequence belongs to the DEAD box helicase family. DEAH subfamily.

It is found in the cytoplasm. Its subcellular location is the perinuclear region. The protein localises to the cytoplasmic ribonucleoprotein granule. It catalyses the reaction ATP + H2O = ADP + phosphate + H(+). Functionally, probable ATP-binding RNA helicase which plays a central role during spermatogenesis and oogenesis by repressing transposable elements and preventing their mobilization, which is essential for the germline integrity. Acts via the piRNA metabolic process, which mediates the repression of transposable elements during meiosis by forming complexes composed of piRNAs and Piwi and govern the methylation and subsequent repression of transposons. Involved in the repression of LTR retrotransposon copia. Also involved in telomere regulation by repressing specialized telomeric retroelements HeT-A, TAHRE, and TART; Drosophila telomeres being maintained by transposition of specialized telomeric retroelements. Involved in telomeric trans-silencing, a repression mechanism by which a transposon or a transgene inserted in subtelomeric heterochromatin has the capacity to repress in trans in the female germline, a homologous transposon, or transgene located in euchromatin. Involved in the repression of testis-expressed Stellate genes by the homologous Su(Ste) repeats. Required for anteroposterior and dorsoventral axis formation during oogenesis. Key component of the perinuclear meiotic nuage, an electron dense structure involved in the post-transcriptional regulation of transposons and mRNAs; required for recruitment of other nuage comonents including vas, krimp, aub and mael. May have a role in production of piwi-interacting RNA (piRNA). This Drosophila melanogaster (Fruit fly) protein is Probable ATP-dependent RNA helicase spindle-E.